We begin with the raw amino-acid sequence, 554 residues long: Phenylalanine--tRNA ligase beta subunit (554 aa).

The B5 domain occupies 276–351; sequence LTPRYREISI…KNHGYEKFEG (76 aa). Asp-329, Asp-335, Glu-338, and Glu-339 together coordinate Mg(2+).

The protein belongs to the phenylalanyl-tRNA synthetase beta subunit family. Type 2 subfamily. As to quaternary structure, tetramer of two alpha and two beta subunits. Mg(2+) is required as a cofactor.

Its subcellular location is the cytoplasm. The enzyme catalyses tRNA(Phe) + L-phenylalanine + ATP = L-phenylalanyl-tRNA(Phe) + AMP + diphosphate + H(+). This Methanococcus vannielii (strain ATCC 35089 / DSM 1224 / JCM 13029 / OCM 148 / SB) protein is Phenylalanine--tRNA ligase beta subunit.